The following is a 453-amino-acid chain: uncharacterized protein (453 aa).

To B.subtilis YcdB.

This is an uncharacterized protein from Bacillus subtilis (strain 168).